The chain runs to 366 residues: Phosphoserine aminotransferase (366 aa).

Residue arginine 42 coordinates L-glutamate. Pyridoxal 5'-phosphate contacts are provided by residues 76–77 (AT), tryptophan 101, threonine 156, aspartate 178, and glutamine 201. Residue lysine 202 is modified to N6-(pyridoxal phosphate)lysine. Residue 243-244 (NT) participates in pyridoxal 5'-phosphate binding.

This sequence belongs to the class-V pyridoxal-phosphate-dependent aminotransferase family. SerC subfamily. Homodimer. Requires pyridoxal 5'-phosphate as cofactor.

The protein localises to the cytoplasm. The enzyme catalyses O-phospho-L-serine + 2-oxoglutarate = 3-phosphooxypyruvate + L-glutamate. It catalyses the reaction 4-(phosphooxy)-L-threonine + 2-oxoglutarate = (R)-3-hydroxy-2-oxo-4-phosphooxybutanoate + L-glutamate. It participates in amino-acid biosynthesis; L-serine biosynthesis; L-serine from 3-phospho-D-glycerate: step 2/3. It functions in the pathway cofactor biosynthesis; pyridoxine 5'-phosphate biosynthesis; pyridoxine 5'-phosphate from D-erythrose 4-phosphate: step 3/5. Catalyzes the reversible conversion of 3-phosphohydroxypyruvate to phosphoserine and of 3-hydroxy-2-oxo-4-phosphonooxybutanoate to phosphohydroxythreonine. This chain is Phosphoserine aminotransferase, found in Aromatoleum aromaticum (strain DSM 19018 / LMG 30748 / EbN1) (Azoarcus sp. (strain EbN1)).